A 478-amino-acid polypeptide reads, in one-letter code: Ribosomal RNA small subunit methyltransferase F (478 aa).

S-adenosyl-L-methionine contacts are provided by residues 126-132 (AAAPGSK), Glu-150, Asp-177, and Asp-195. The Nucleophile role is filled by Cys-248.

It belongs to the class I-like SAM-binding methyltransferase superfamily. RsmB/NOP family.

Its subcellular location is the cytoplasm. It catalyses the reaction cytidine(1407) in 16S rRNA + S-adenosyl-L-methionine = 5-methylcytidine(1407) in 16S rRNA + S-adenosyl-L-homocysteine + H(+). Functionally, specifically methylates the cytosine at position 1407 (m5C1407) of 16S rRNA. This chain is Ribosomal RNA small subunit methyltransferase F, found in Erwinia tasmaniensis (strain DSM 17950 / CFBP 7177 / CIP 109463 / NCPPB 4357 / Et1/99).